A 209-amino-acid chain; its full sequence is Germin-like protein (209 aa).

Residues 1–18 form the signal peptide; sequence MIVPIFFLFSLLFSSSHG. A disulfide bridge connects residues C24 and C39. Residues 53–199 enclose the Cupin type-1 domain; sequence SGLGITGNTT…ASFLDPAEIK (147 aa). N-linked (GlcNAc...) asparagine glycosylation is present at N60. 4 residues coordinate Mn(2+): H101, H103, E108, and H147.

The protein resides in the secreted. It localises to the extracellular space. It is found in the apoplast. In terms of biological role, has antibacterial activity against B.subtilis (MIC=5 ug), B.cereus (MIC=50 ug), A.hydrophila (MIC=2.5 ug), S.marcescens(MIC=10 ug), S.enterica (MIC=10 ug), P.entomophila (MIC=2.5 ug) and P.rhodesiae (MIC=10 ug). Has antifungal activity against F.solani KACC 40384 and F.oxysporum KACC 40032. Probably has no oxalate oxidase activity even if the active site is conserved. This chain is Germin-like protein, found in Morus alba (White mulberry).